The sequence spans 208 residues: Predicted GPI-anchored protein 37 (208 aa).

Positions 1–18 are cleaved as a signal peptide; it reads MLFTQLIILLTVTSQALS. Residues 33-93 are disordered; that stretch reads TKRLGGGSRG…SSSSSGSRNW (61 aa). Residues 36-53 are compositionally biased toward gly residues; that stretch reads LGGGSRGGSSSGSRGGSS. Residues 54–63 are compositionally biased toward low complexity; it reads SGSSSGSSSG. N173 carries an N-linked (GlcNAc...) asparagine glycan. S185 carries the GPI-anchor amidated serine lipid modification. Residues 186–208 constitute a propeptide, removed in mature form; the sequence is SSLNIPSTHFYLIGFAAAYSIVL.

It belongs to the PGA37 family.

The protein localises to the cell membrane. In terms of biological role, predicted GPI-anchored protein which may have a role during host infection. The sequence is that of Predicted GPI-anchored protein 37 (PGA37) from Candida albicans (strain SC5314 / ATCC MYA-2876) (Yeast).